The chain runs to 599 residues: MKNIRNFSIIAHIDHGKSTLSDRLIQTCGGLSEREMAAQVLDSMDLERERGITIKAQSVTLDYKAPDGQVYQLNFIDTPGHVDFSYEVSRSLAACEGALLVVDAGQGVEAQTLANCYTAMEMDLEVVPVLNKIDLPAADPDRVAQEIEDIVGIDATDAVRCSAKTGVGVPDVLERLVRDIPPPEGDPAAPLQALIIDSWFDNYLGVVSLVRIKNGTLRKGDKIKVMSTGQLYNADRLGIFTPKRIDREVLNCGEVGWLVCAIKDIHGAPVGDTLTLARQPADKVLPGFKKVKPQVYAGLFPVSSDDYEAFRDALGKLSLNDASLFYEPESSTALGFGFRCGFLGLLHMEIIQERLEREYDLDLITTAPTVIYEVLTTDNTTVYVDSPSKLPPLNGINELREPVAECHMLLPQAYLGNVITLCIEKRGVQTNMVYHGSQVALTYEIPMVEVVLDFFDRLKSTSRGYASLDYGFKRFQNSDMVRVDVLINGERVDALALITHRDNAPYRGREFVDKLQELIPRQQFDIAIQAAIGNHIIARSTVKQLRKNVLAKCYGGDVSRKKKLLQKQKEGKKRMKQVGNVELPQEAFLAILHVGKDSK.

Residues 2 to 184 (KNIRNFSIIA…RLVRDIPPPE (183 aa)) form the tr-type G domain. Residues 14-19 (DHGKST) and 131-134 (NKID) each bind GTP.

This sequence belongs to the TRAFAC class translation factor GTPase superfamily. Classic translation factor GTPase family. LepA subfamily.

The protein localises to the cell inner membrane. The catalysed reaction is GTP + H2O = GDP + phosphate + H(+). Its function is as follows. Required for accurate and efficient protein synthesis under certain stress conditions. May act as a fidelity factor of the translation reaction, by catalyzing a one-codon backward translocation of tRNAs on improperly translocated ribosomes. Back-translocation proceeds from a post-translocation (POST) complex to a pre-translocation (PRE) complex, thus giving elongation factor G a second chance to translocate the tRNAs correctly. Binds to ribosomes in a GTP-dependent manner. In Sodalis glossinidius (strain morsitans), this protein is Elongation factor 4.